A 244-amino-acid chain; its full sequence is Ferric aerobactin reductase IutB (244 aa).

Residues Cys220, Cys221, Cys232, and Cys235 each coordinate [2Fe-2S] cluster.

In terms of assembly, monomer. It depends on [2Fe-2S] cluster as a cofactor.

The protein resides in the cytoplasm. It catalyses the reaction 2 a Fe(II)-siderophore + NAD(+) + H(+) = 2 a Fe(III)-siderophore + NADH. The catalysed reaction is 2 a Fe(II)-siderophore + NADP(+) + H(+) = 2 a Fe(III)-siderophore + NADPH. Ferric-siderophore reductase involved in iron removal from the siderophores after their transport into the cell. Acts as a major ferric-aerobactin reductase catalyzing the reduction of Fe(3+)-aerobactin, a citrate-hydroxamate siderophore produced by other bacteria. Catalyzes reduction of Fe(3+)-vulnibactin, a catecholate siderophore synthesized by V.vulnificus, in the absence of VuuB. Catalyzes reduction of ferrioxamine B and Fe(3+)-vibriobactin in vitro. No activity with Fe(3+)-enterobactin. Catalyzes reduction of ferric chelating compound Fe(3+)-nitrilotriacetic acid (NTA) in the presence of NADH, NADPH or reduced glutathione (GSH) as its electron donor in vitro. Also catalyzes reduction of ferric chelating compounds Fe(3+)-citrate and Fe(3+)-EDTA as well as non-complexed FeCl3 in the presence of GSH as its electron donor in vitro. Highest activity with Fe(3+)-NTA as electron acceptor and GSH as donor. This chain is Ferric aerobactin reductase IutB, found in Vibrio vulnificus.